Here is a 333-residue protein sequence, read N- to C-terminus: Foldase protein PrsA (333 aa).

The N-terminal stretch at 1–22 (MKKSTKLLAGIVTLASAMTLAA) is a signal peptide. Cys-23 carries N-palmitoyl cysteine lipidation. Cys-23 is lipidated: S-diacylglycerol cysteine. In terms of domain architecture, PpiC spans 145-240 (TPEMTTQVIT…NKFYIVKVTK (96 aa)). Residues 301 to 333 (DKKASKANTSKSDQKTSSDSSKDSQSSKSKSEK) are disordered. Basic and acidic residues predominate over residues 312-322 (SDQKTSSDSSK). A compositionally biased stretch (low complexity) spans 323 to 333 (DSQSSKSKSEK).

This sequence belongs to the PrsA family.

It localises to the cell membrane. The catalysed reaction is [protein]-peptidylproline (omega=180) = [protein]-peptidylproline (omega=0). Functionally, plays a major role in protein secretion by helping the post-translocational extracellular folding of several secreted proteins. In Streptococcus equi subsp. zooepidemicus (strain MGCS10565), this protein is Foldase protein PrsA.